A 464-amino-acid polypeptide reads, in one-letter code: MEEHYYVSIDIGSSSVKTIVGEKFHNGINVIGTGQTYTSGIKNGLIDDFDIARQAIKDTIKKASIASGVDIKDVFLKLPIIGTEVYDESNEIEFYEDTEIDGTHIESVLEGIRDKNDVPETEVINVFPIRFVVDKDNEVSDPKELIARHSLKVDAGVIAIQKSILINMIKCVEACGVDVLDVYSDAYNYGFILTPTEKELGACVIDIGEDLTQVAFYERGELVDAESIEMAGRDITDDIAQGLNTTYDTAEKVKHQYGHAFYDSASDQDVFSVDQVDSDEHVQYTQKDLSDFIEQRVEDIFFEVFDVLQELGLTKVNGGFVVTGGSANLLGVKELLQDMVSEKVRIHTPSQMGIRKPEFSSAISTISSSIAFDELLDYVTISYQDNEEFEEEVIETDKDTETKSSGFDWFKRKSNKKENDEVAPEAPREESYEDRENHLEDEQQTEGKAKEESKFKKLMKSLFE.

The disordered stretch occupies residues 392-464 (EVIETDKDTE…FKKLMKSLFE (73 aa)). Residues 416–455 (KKENDEVAPEAPREESYEDRENHLEDEQQTEGKAKEESKF) are compositionally biased toward basic and acidic residues.

Belongs to the FtsA/MreB family. As to quaternary structure, self-interacts. Interacts with FtsZ.

It localises to the cell membrane. Functionally, cell division protein that is involved in the assembly of the Z ring. May serve as a membrane anchor for the Z ring. This chain is Cell division protein FtsA, found in Staphylococcus epidermidis (strain ATCC 12228 / FDA PCI 1200).